A 98-amino-acid polypeptide reads, in one-letter code: NADH-ubiquinone oxidoreductase chain 4L (98 aa).

A run of 3 helical transmembrane segments spans residues 1–21 (MSLA…GLLM), 25–45 (HLMS…VMAT), and 59–81 (MPII…LVMV).

The protein belongs to the complex I subunit 4L family. In terms of assembly, core subunit of respiratory chain NADH dehydrogenase (Complex I) which is composed of 45 different subunits.

Its subcellular location is the mitochondrion inner membrane. The catalysed reaction is a ubiquinone + NADH + 5 H(+)(in) = a ubiquinol + NAD(+) + 4 H(+)(out). Its function is as follows. Core subunit of the mitochondrial membrane respiratory chain NADH dehydrogenase (Complex I) which catalyzes electron transfer from NADH through the respiratory chain, using ubiquinone as an electron acceptor. Part of the enzyme membrane arm which is embedded in the lipid bilayer and involved in proton translocation. In Equus asinus (Donkey), this protein is NADH-ubiquinone oxidoreductase chain 4L (MT-ND4L).